A 408-amino-acid chain; its full sequence is Zinc chaperone AztD (408 aa).

The signal sequence occupies residues 1-21 (MLRHLAGASALALTLAGAGFA). The N-terminal Zn(2+)-binding motif; binds a third Zn(2+) with low affinity signature appears at 23–29 (DHDHDHE). Zn(2+) contacts are provided by His-99, His-102, Asp-104, His-124, His-167, His-218, and His-408. An intrachain disulfide couples Cys-214 to Cys-231.

As to quaternary structure, monomer.

It localises to the periplasm. Functionally, acts as a zinc chaperone in the AztABCD zinc transport system. Directly transfers one zinc cation to the solute binding protein AztC; the transfer occurs without the formation of a stable interaction. Binds 3 Zn(2+), two with high affinity and one with low affinity, and transfers only Zn(2+) bound to site 2 to AztC. Likely functions to store zinc in the periplasm and may be important for zinc accumulation in zinc-limited environments. This is Zinc chaperone AztD from Paracoccus denitrificans (strain Pd 1222).